The following is a 212-amino-acid chain: MKLDVIKLDGGKGGSIELPDDIFGIEEIRADILQRCVTWQLAKRRAGTHKIQVRNEVSRTGKKMYKQKGTGGARHGSRRAAQFVGGAKAHGPVVRSHAFDLPKKVRALALRHALSSKAKDGSLIVLDSATLTEAKTAALRASFEKIGVTNALVIAGAQVDNNLKLAARNIPNVDVLPNAGLNVYDVLRRRTLVLTKDAVAAIQARFQPEEAA.

This sequence belongs to the universal ribosomal protein uL4 family. In terms of assembly, part of the 50S ribosomal subunit.

Functionally, one of the primary rRNA binding proteins, this protein initially binds near the 5'-end of the 23S rRNA. It is important during the early stages of 50S assembly. It makes multiple contacts with different domains of the 23S rRNA in the assembled 50S subunit and ribosome. In terms of biological role, forms part of the polypeptide exit tunnel. The polypeptide is Large ribosomal subunit protein uL4 (Phenylobacterium zucineum (strain HLK1)).